Here is a 1116-residue protein sequence, read N- to C-terminus: MAYPNDVRNVWDVYNVFRDVPNREHLIRDIRNGLVTVRNLTNMLTNMERDDQLIIAQLSNMMKSLSIGIEKAQNELSKLKTTDADRAAVLADYQTSVLNIERNTMLLTGYFKQLVLDLTGYVGASVYPILPFMITGDQSMMVDSINVNMKNVFDDKHEQEIVLPIHPACFVSTITEDTSSVVYADGDELYSVHVRHENMTMYVNVLGETVETRQLSMIGESIVPDDFAPSLLILRFSQDSVGEVFYLSHDNIKKFLGHSLEYTDKYVIFDVARRASTTRNTITDGFCSVDGVPYLDGRFIYQPSGISADSNICAIYNSYVLDVLRYITECEVDTLRSVYDRTSSTVFSKTDVLRPRLLTMQSNISALSAATPQLANDVITSDSTDLLSLGTVLTVSNEFTADDTTLSTSLAGHCQVDYSEGSPQDKSMSIPVSCDSSQLASSTVHSYSADILGHGLKGDRNLNLMINVPGLMNPQKVTVDYVYSDGYKLNFASVVAPDAPFWINATLQLSLSPSAHNMLSKLTPLDNDACPGLKAQANTPVLVSMTINLDDATPALGGEVIQNCVFKIHHGDDVYSFVTDFDVISYTSTSGTNCLKLISSVDITSQLPSDMWIYVMNGSPDAAFISGDSVNMSSVDWHQSTSQTVGNYVYATMKAYWNVTSYDVEARPYATYVPGKINFTAIDHADVFVDDYNTGVNSYVIVNSRIYYKGNSSIYEVPSGSFIKVSYFTSPLKNPTVDAYNAEISRNSAYLIKANASLDSVAAMLSNISNRIDAMERLMEPTRAHRIAGVVSSIGGVISLGMPLLGAIVVTIGSIISIADPDKQGIDYHSVANAFMSWCQYAAVCRYEYGLLKRGDEKLDVLSFMPKRVVSDFKNKPDVISLPELGESVLRGSSTDYLDTEINIIYNDMQLLGQGKLSDWLNKTVSKVENNAANFFERNLVKSLANKEVLPVHARVEITQTEKIGDVYRTTILYTGINEGSYLGGDVFASRLGDKNILRMNGFESGPGRFKAIVESTTEVGNFRVVDWTVSGMSRYEIYAAAGEVYPSKDPSHADVQLLYESIVRDLTTRDGSFVLKHHDVLLLPGQLDAFEELIIKNASNYQYAFIGSNCSKLCA.

The PPPDE domain maps to Glu929 to Ala1116. Residues His953 and Cys1111 contribute to the active site.

This sequence belongs to the phytoreovirus minor outer capsid protein P2 family. In terms of assembly, interacts with host ent-kaurene oxidases OSKO1, OSKO2, OSKOL4 and OSKOL5; this interaction.

The protein localises to the virion. It is found in the host cytoplasm. In terms of biological role, minor capsid protein present in the outer capsid, which is required for adsorption of the virus onto host insect cells (Potential). Could play a role in the host plant virus induced dwarfism. The protein is Minor outer capsid protein P2 of Rice dwarf virus (isolate Fujian) (RDV).